Here is a 350-residue protein sequence, read N- to C-terminus: Peroxidase 24 (350 aa).

Residues 1 to 27 (MANKSLEIRFLFPLVLFLVVKLLCVDG) form the signal peptide. Cystine bridges form between C55–C135, C88–C93, C141–C346, and C221–C253. The N-linked (GlcNAc...) asparagine glycan is linked to N73. H86 serves as the catalytic Proton acceptor. 5 residues coordinate Ca(2+): D87, V90, G92, D94, and S96. Substrate is bound at residue P184. An N-linked (GlcNAc...) asparagine glycan is attached at N189. H214 is a binding site for heme b. T215 contacts Ca(2+). An N-linked (GlcNAc...) asparagine glycan is attached at N230. Residues D269 and D277 each contribute to the Ca(2+) site.

It belongs to the peroxidase family. Classical plant (class III) peroxidase subfamily. It depends on heme b as a cofactor. Requires Ca(2+) as cofactor.

It is found in the secreted. The catalysed reaction is 2 a phenolic donor + H2O2 = 2 a phenolic radical donor + 2 H2O. Its function is as follows. Removal of H(2)O(2), oxidation of toxic reductants, biosynthesis and degradation of lignin, suberization, auxin catabolism, response to environmental stresses such as wounding, pathogen attack and oxidative stress. These functions might be dependent on each isozyme/isoform in each plant tissue. In Arabidopsis thaliana (Mouse-ear cress), this protein is Peroxidase 24 (PER24).